The following is a 340-amino-acid chain: Uroporphyrinogen decarboxylase (340 aa).

Residues 21–25 (RQAGR), Asp71, Tyr148, Ser203, and His316 each bind substrate.

The protein belongs to the uroporphyrinogen decarboxylase family. In terms of assembly, homodimer.

The protein localises to the cytoplasm. It catalyses the reaction uroporphyrinogen III + 4 H(+) = coproporphyrinogen III + 4 CO2. Its pathway is porphyrin-containing compound metabolism; protoporphyrin-IX biosynthesis; coproporphyrinogen-III from 5-aminolevulinate: step 4/4. Its function is as follows. Catalyzes the decarboxylation of four acetate groups of uroporphyrinogen-III to yield coproporphyrinogen-III. The sequence is that of Uroporphyrinogen decarboxylase from Campylobacter jejuni subsp. jejuni serotype O:6 (strain 81116 / NCTC 11828).